A 448-amino-acid chain; its full sequence is Probable alpha-galactosidase B (448 aa).

A signal peptide spans 1-23 (MSRFHLPLAAAVVLVSCLWSANA). Disulfide bonds link Cys-46/Cys-78 and Cys-128/Cys-158. The active-site Nucleophile is Asp-156. Asn-163 and Asn-181 each carry an N-linked (GlcNAc...) asparagine glycan. 226 to 230 (EWGQA) provides a ligand contact to substrate. An N-linked (GlcNAc...) asparagine glycan is attached at Asn-237. Residue Asp-248 is the Proton donor of the active site.

It belongs to the glycosyl hydrolase 27 family.

It is found in the secreted. The enzyme catalyses Hydrolysis of terminal, non-reducing alpha-D-galactose residues in alpha-D-galactosides, including galactose oligosaccharides, galactomannans and galactolipids.. Hydrolyzes a variety of simple alpha-D-galactoside as well as more complex molecules such as oligosaccharides and polysaccharides. This Aspergillus clavatus (strain ATCC 1007 / CBS 513.65 / DSM 816 / NCTC 3887 / NRRL 1 / QM 1276 / 107) protein is Probable alpha-galactosidase B (aglB).